A 298-amino-acid chain; its full sequence is Calcium-binding protein 1 (298 aa).

The segment covering 1–10 (MSSHIAKSES) has biased composition (basic and acidic residues). Residues 1–131 (MSSHIAKSES…APAGTPEADP (131 aa)) form a disordered region. Ser2 carries N-myristoyl glycine lipidation. His4 carries the S-palmitoyl cysteine lipid modification. The segment covering 11 to 25 (KTSLLKAAAASGGSR) has biased composition (low complexity). 4 consecutive EF-hand domains span residues 153-188 (EEIE…MGYM), 207-224 (GHVD…KLLA), 230-265 (IGVK…LLGH), and 267-298 (VGHR…MMSR). Ca(2+) is bound by residues Asp166, Asp168, Asp170, Tyr172, and Asp177. Ca(2+) contacts are provided by Asp243, Asn245, Asp247, and Glu249. Position 251 is a phosphoserine (Ser251). Residues Glu254, Asp280, Asn282, Asp284, Arg286, and Glu291 each coordinate Ca(2+).

Interacts with ITPR1, ITPR2 and ITPR3. The strength of this interaction inversely correlates with calcium concentration. Interacts with CACNA1A (via C-terminal CDB motif) in the pre- and postsynaptic membranes. Interacts with CACNA1C. Interacts with CACNA1D. Interacts (via EF-hands 1 and 2) at microtubules with MAP1LC3B. Interacts (via EF-hands 1 and 2) with NSMF (via the central NLS-containing motif region), the interaction occurs in a calcium dependent manner after synaptic NMDA receptor stimulation and prevents nuclear import of NSMF. Interacts with MYO1C and TRPC5. Interacts with SPACA9. Phosphorylated. The phosphorylation regulates the activity. As to expression, somatodendritic compartment of neurons. Restricted expression in retina to a subpopulation of amacrine, bipolar, and ganglion cells. According to PubMed:11906216, expression is heterogeneous within brain regions and their major cell types and does not match with those of marker proteins for characterized neuronal subpopulations. Isoform 2: Minor isoform expressed in the brain, in the granule cell layer of the cerebellum, at low level. Not developmentally regulated. Isoform 3: Minor isoform expressed in the brain, in the granule cell layer. of the cerebellum, at low level. Not developmentally regulated.

The protein localises to the cytoplasm. Its subcellular location is the cytoskeleton. Modulates calcium-dependent activity of inositol 1,4,5-triphosphate receptors (ITPRs). Inhibits agonist-induced intracellular calcium signaling. Enhances inactivation and does not support calcium-dependent facilitation of voltage-dependent P/Q-type calcium channels. Causes calcium-dependent facilitation and inhibits inactivation of L-type calcium channels by binding to the same sites as calmodulin in the C-terminal domain of CACNA1C, but has an opposite effect on channel function. Suppresses the calcium-dependent inactivation of CACNA1D. Inhibits TRPC5 channels. Prevents NMDA receptor-induced cellular degeneration. Required for the normal transfer of light signals through the retina. The polypeptide is Calcium-binding protein 1 (Cabp1) (Rattus norvegicus (Rat)).